Reading from the N-terminus, the 142-residue chain is Large ribosomal subunit protein uL13 (142 aa).

This sequence belongs to the universal ribosomal protein uL13 family. Part of the 50S ribosomal subunit.

In terms of biological role, this protein is one of the early assembly proteins of the 50S ribosomal subunit, although it is not seen to bind rRNA by itself. It is important during the early stages of 50S assembly. The chain is Large ribosomal subunit protein uL13 from Stenotrophomonas maltophilia (strain K279a).